The sequence spans 283 residues: uncharacterized protein (283 aa).

Positions 1–23 are cleaved as a signal peptide; it reads MFAFASFAISAIFFLCSFSYVSS.

Its subcellular location is the secreted. This is an uncharacterized protein from Schizosaccharomyces pombe (strain 972 / ATCC 24843) (Fission yeast).